A 122-amino-acid chain; its full sequence is Alkene monooxygenase system, ferredoxin component (122 aa).

The region spanning 16–111 is the Rieske domain; that stretch reads VDVCAVDDLW…LKVEGGRVLI (96 aa). 4 residues coordinate [2Fe-2S] cluster: Cys55, His57, Cys75, and His78.

The protein belongs to the bacterial ring-hydroxylating dioxygenase ferredoxin component family. As to quaternary structure, homodimer. The alkene monooxygenase multicomponent enzyme system is composed of an electron transfer component and a monooxygenase component interacting with the effector protein XamoD. The electron transfer component is composed of a ferredoxin reductase (XamoF) and a ferredoxin (XamoC), and the monooxygenase component is formed by a heterohexamer (dimer of heterotrimers) of two alpha subunits (XamoA), two beta subunits (XamoE) and two gamma subunits (XamoB). Requires [2Fe-2S] cluster as cofactor.

Its subcellular location is the cytoplasm. Ferredoxin component of the alkene monooxygenase multicomponent enzyme system which catalyzes the O2- and NADH-dependent epoxidation of short chain (C2 to C6) alkenes to their corresponding epoxides. Functions as an intermediate electron transfer protein. This is Alkene monooxygenase system, ferredoxin component from Xanthobacter autotrophicus (strain ATCC BAA-1158 / Py2).